The primary structure comprises 70 residues: Small ribosomal subunit protein bS21B (70 aa).

Residues 37–70 (SYEKPTTERKRKKAAAVARLRKQVRRSMPPKKKY) are disordered. A compositionally biased stretch (basic residues) spans 45–70 (RKRKKAAAVARLRKQVRRSMPPKKKY).

It belongs to the bacterial ribosomal protein bS21 family.

This chain is Small ribosomal subunit protein bS21B, found in Burkholderia pseudomallei (strain K96243).